The sequence spans 208 residues: Glycerol-3-phosphate acyltransferase (208 aa).

The next 5 helical transmembrane spans lie at 3-23 (ILLA…VVVS), 51-71 (KAAI…VWLA), 78-98 (DVAI…PVFF), 115-135 (AVHP…AFFF), and 140-160 (LAAL…FGMP).

Belongs to the PlsY family. Probably interacts with PlsX.

The protein localises to the cell inner membrane. The enzyme catalyses an acyl phosphate + sn-glycerol 3-phosphate = a 1-acyl-sn-glycero-3-phosphate + phosphate. The protein operates within lipid metabolism; phospholipid metabolism. Its function is as follows. Catalyzes the transfer of an acyl group from acyl-phosphate (acyl-PO(4)) to glycerol-3-phosphate (G3P) to form lysophosphatidic acid (LPA). This enzyme utilizes acyl-phosphate as fatty acyl donor, but not acyl-CoA or acyl-ACP. This Burkholderia orbicola (strain MC0-3) protein is Glycerol-3-phosphate acyltransferase.